Consider the following 131-residue polypeptide: Small ribosomal subunit protein uS11 (131 aa).

It belongs to the universal ribosomal protein uS11 family. As to quaternary structure, part of the 30S ribosomal subunit. Interacts with proteins S7 and S18. Binds to IF-3.

In terms of biological role, located on the platform of the 30S subunit, it bridges several disparate RNA helices of the 16S rRNA. Forms part of the Shine-Dalgarno cleft in the 70S ribosome. The polypeptide is Small ribosomal subunit protein uS11 (Helicobacter pylori (strain ATCC 700392 / 26695) (Campylobacter pylori)).